Reading from the N-terminus, the 177-residue chain is Inorganic pyrophosphatase (177 aa).

Positions 31, 45, and 57 each coordinate substrate. 3 residues coordinate Mg(2+): D67, D72, and D104. Substrate is bound at residue Y142.

The protein belongs to the PPase family. Homohexamer. Mg(2+) is required as a cofactor.

The protein localises to the cytoplasm. The catalysed reaction is diphosphate + H2O = 2 phosphate + H(+). In terms of biological role, catalyzes the hydrolysis of inorganic pyrophosphate (PPi) forming two phosphate ions. This chain is Inorganic pyrophosphatase, found in Neisseria meningitidis serogroup A / serotype 4A (strain DSM 15465 / Z2491).